A 500-amino-acid polypeptide reads, in one-letter code: Inner membrane transporter YjeM (500 aa).

Residues 1–10 lie on the Cytoplasmic side of the membrane; sequence MTHTIKKMSL. Residues 11 to 31 traverse the membrane as a helical segment; that stretch reads IGLILMIFTSVFGFANSPSAF. Topologically, residues 32 to 37 are periplasmic; the sequence is YLMGYS. A helical membrane pass occupies residues 38–58; that stretch reads AIPWYIFSALLFFIPFALMMA. At 59-83 the chain is on the cytoplasmic side; it reads EMGSAYRKEEGGIYSWMNNSVGPRY. A helical membrane pass occupies residues 84 to 104; that stretch reads AFIGTFMWFSSYVIWMVSTAA. Topologically, residues 105–124 are periplasmic; it reads KIWVPFSTFVFGADMTQHWR. The chain crosses the membrane as a helical span at residues 125-145; sequence IAGLEPTQVVGLLAVGWMILV. Over 146–163 the chain is Cytoplasmic; sequence TCVAARGINKIARITAVG. A helical transmembrane segment spans residues 164 to 184; sequence GIAVMCLNLVLLLVSVAILLL. Residues 185–209 are Periplasmic-facing; it reads NGGHFAQEINFTSSPNPGYHSGLAM. A helical transmembrane segment spans residues 210-230; sequence LSFVVFAIFAYGGIEAVGGLV. Residues 231–243 lie on the Cytoplasmic side of the membrane; it reads DKTEKPEKNFAKG. The chain crosses the membrane as a helical span at residues 244-264; sequence IVFAAIVISIGYSLAIFLWGV. At 265–308 the chain is on the periplasmic side; sequence STNWQQILSNSAVNLGNITYILMSSLGTTLGNALNLSPEAAMTV. A helical membrane pass occupies residues 309-329; it reads GVWFARITGLSMFLAYTGAFF. Over 330–361 the chain is Cytoplasmic; that stretch reads TLSYSPLKAIIQGTPKALWPAPMTTLNANGMP. A helical transmembrane segment spans residues 362 to 382; it reads ATAMWLQCVLVSLFILLVSFG. Residues 383–394 lie on the Periplasmic side of the membrane; sequence GDTASAFYNKLT. A helical membrane pass occupies residues 395 to 415; sequence LMANVSMTLPYLFLALAFPFF. The Cytoplasmic portion of the chain corresponds to 416 to 433; that stretch reads KARQDLERPFVLFKTKAS. Residues 434–454 traverse the membrane as a helical segment; sequence TLVATGVVVLVVTFANVFTII. The Periplasmic portion of the chain corresponds to 455–462; it reads QPVIEAGD. Residues 463 to 483 form a helical membrane-spanning segment; sequence WDSALWMIGGPIFFSLLAMAI. At 484 to 500 the chain is on the cytoplasmic side; the sequence is YQNYSSRMSADPEWAAE.

This sequence belongs to the amino acid-polyamine-organocation (APC) superfamily.

It is found in the cell inner membrane. This is Inner membrane transporter YjeM (yjeM) from Salmonella typhi.